Consider the following 551-residue polypeptide: Solute carrier family 22 member 27 (551 aa).

Over methionine 1–arginine 15 the chain is Cytoplasmic. Residues phenylalanine 16–alanine 36 form a helical membrane-spanning segment. Over methionine 37 to asparagine 145 the chain is Extracellular. Residues asparagine 39, asparagine 56, asparagine 62, asparagine 102, and asparagine 107 are each glycosylated (N-linked (GlcNAc...) asparagine). A helical transmembrane segment spans residues serine 146–leucine 166. The Cytoplasmic portion of the chain corresponds to serine 167–lysine 173. Residues phenylalanine 174 to proline 194 form a helical membrane-spanning segment. The Extracellular segment spans residues serine 195 to arginine 203. A helical membrane pass occupies residues phenylalanine 204 to tryptophan 224. Topologically, residues threonine 225–alanine 234 are cytoplasmic. The helical transmembrane segment at alanine 235 to phenylalanine 255 threads the bilayer. Over arginine 256–tryptophan 258 the chain is Extracellular. Residues histidine 259–leucine 279 traverse the membrane as a helical segment. At serine 280–arginine 348 the chain is on the cytoplasmic side. The chain crosses the membrane as a helical span at residues isoleucine 349–histidine 369. Topologically, residues leucine 370 to asparagine 376 are extracellular. A helical transmembrane segment spans residues isoleucine 377–phenylalanine 397. At valine 398–arginine 405 the chain is on the cytoplasmic side. The helical transmembrane segment at isoleucine 406–proline 426 threads the bilayer. The Extracellular segment spans residues glutamine 427–leucine 432. Residues arginine 433–leucine 453 traverse the membrane as a helical segment. At histidine 454–alanine 467 the chain is on the cytoplasmic side. Residues valine 468–leucine 488 traverse the membrane as a helical segment. At alanine 489–asparagine 494 the chain is on the extracellular side. Residues methionine 495–proline 515 form a helical membrane-spanning segment. The Cytoplasmic segment spans residues glutamate 516–phenylalanine 551. A disordered region spans residues proline 523–phenylalanine 551. Basic and acidic residues predominate over residues serine 525–isoleucine 545.

It belongs to the major facilitator (TC 2.A.1) superfamily. Organic cation transporter (TC 2.A.1.19) family. In terms of tissue distribution, expressed in proximal kidney tubules, and in liver hepatocytes (at protein level).

It is found in the cell membrane. Functionally, does not appear to have transporter activity. Its function is as follows. Sodium-independent organic anion transporter which exhibits high specificity for L-carnitine. Can also transport salicylic acid and the drug cimetidine. This chain is Solute carrier family 22 member 27, found in Mus musculus (Mouse).